The following is a 283-amino-acid chain: Homeobox protein Hox-C12b (283 aa).

A DNA-binding region (homeobox) is located at residues 215-274 (TRKKRKPYSKLQLNELEGEFILNEFITRQRRRELSDRLNLTDQQVKIWFQNRRMKKKRLL).

Belongs to the Abd-B homeobox family.

The protein resides in the nucleus. Its function is as follows. Sequence-specific transcription factor which is part of a developmental regulatory system that provides cells with specific positional identities on the anterior-posterior axis. This chain is Homeobox protein Hox-C12b (hoxc12b), found in Danio rerio (Zebrafish).